Consider the following 109-residue polypeptide: Cysteine-rich venom protein 7 (109 aa).

An N-terminal signal peptide occupies residues 1–21; that stretch reads MSKVFVIILVALMVAISIASA. 5 disulfide bridges follow: C30/C47, C37/C52, C46/C58, C70/C90, and C78/C98.

In terms of tissue distribution, expressed by the venom gland.

It is found in the secreted. This chain is Cysteine-rich venom protein 7, found in Pimpla hypochondriaca (Parasitoid wasp).